Here is a 439-residue protein sequence, read N- to C-terminus: Leukocyte immunoglobulin-like receptor subfamily A member 3 (439 aa).

An N-terminal signal peptide occupies residues 1–23 (MTPILTVLICLGLSLDPRTHVQA). Ig-like C2-type domains are found at residues 27-108 (PKPT…AGLS), 119-224 (TGAY…GVSK), 226-315 (PSLS…DPLD), and 326-415 (PFLS…SDPL). Cysteine 49 and cysteine 98 are oxidised to a cystine. The N-linked (GlcNAc...) asparagine glycan is linked to asparagine 140. Intrachain disulfides connect cysteine 145-cysteine 197, cysteine 157-cysteine 167, and cysteine 246-cysteine 297. N-linked (GlcNAc...) asparagine glycans are attached at residues asparagine 281, asparagine 302, and asparagine 341. A disulfide bond links cysteine 346 and cysteine 397. Asparagine 431 carries N-linked (GlcNAc...) asparagine glycosylation.

In terms of processing, N-glycosylation is required for ligand binding. Detected in B-cells, and at lower levels in natural killer (NK) cells. Detected in peripheral blood monocytes and lung.

It is found in the secreted. Acts as a soluble receptor for class I MHC antigens. Binds both classical and non-classical HLA class I molecules but with reduced affinities compared to LILRB1 or LILRB2. Binds with high affinity to the surface of monocytes, leading to abolish LPS-induced TNF-alpha production by monocytes. This chain is Leukocyte immunoglobulin-like receptor subfamily A member 3 (LILRA3), found in Homo sapiens (Human).